A 254-amino-acid polypeptide reads, in one-letter code: 3-deoxy-manno-octulosonate cytidylyltransferase (254 aa).

Belongs to the KdsB family.

Its subcellular location is the cytoplasm. The catalysed reaction is 3-deoxy-alpha-D-manno-oct-2-ulosonate + CTP = CMP-3-deoxy-beta-D-manno-octulosonate + diphosphate. Its pathway is nucleotide-sugar biosynthesis; CMP-3-deoxy-D-manno-octulosonate biosynthesis; CMP-3-deoxy-D-manno-octulosonate from 3-deoxy-D-manno-octulosonate and CTP: step 1/1. It participates in bacterial outer membrane biogenesis; lipopolysaccharide biosynthesis. Activates KDO (a required 8-carbon sugar) for incorporation into bacterial lipopolysaccharide in Gram-negative bacteria. The sequence is that of 3-deoxy-manno-octulosonate cytidylyltransferase from Polynucleobacter asymbioticus (strain DSM 18221 / CIP 109841 / QLW-P1DMWA-1) (Polynucleobacter necessarius subsp. asymbioticus).